Reading from the N-terminus, the 421-residue chain is Probable tRNA N6-adenosine threonylcarbamoyltransferase, mitochondrial (421 aa).

The N-terminal 22 residues, 1-22, are a transit peptide targeting the mitochondrion; sequence MNIPKILNNNLVLKRIFCRNYS. A divalent metal cation is bound by residues His-133 and His-137. Substrate-binding positions include 156-160, Asp-189, Gly-208, Glu-212, 308-309, and Thr-336; these read LLSGG and AN. Asp-337 lines the a divalent metal cation pocket.

The protein belongs to the KAE1 / TsaD family. In terms of assembly, homodimer. The cofactor is a divalent metal cation.

It is found in the mitochondrion. The enzyme catalyses L-threonylcarbamoyladenylate + adenosine(37) in tRNA = N(6)-L-threonylcarbamoyladenosine(37) in tRNA + AMP + H(+). In terms of biological role, required for the formation of a threonylcarbamoyl group on adenosine at position 37 (t(6)A37) in mitochondrial tRNAs that read codons beginning with adenine. Probably involved in the transfer of the threonylcarbamoyl moiety of threonylcarbamoyl-AMP (TC-AMP) to the N6 group of A37. Involved in mitochondrial genome maintenance. The polypeptide is Probable tRNA N6-adenosine threonylcarbamoyltransferase, mitochondrial (Caenorhabditis elegans).